A 512-amino-acid polypeptide reads, in one-letter code: Neuronal acetylcholine receptor subunit alpha-3 (512 aa).

The N-terminal stretch at 1–23 (MNSASRITLFFLLTVLITQECLS) is a signal peptide. Topologically, residues 24–242 (SKGEDRLFRR…PLFYTINLII (219 aa)) are extracellular. Residues Asn47 and Asn164 are each glycosylated (N-linked (GlcNAc...) asparagine). 2 disulfide bridges follow: Cys151–Cys165 and Cys215–Cys216. The helical transmembrane segment at 243–258 (PCLLISFLTILVFYLP) threads the bilayer. Topologically, residues 259 to 260 (SD) are cytoplasmic. A helical membrane pass occupies residues 261–277 (CGEKVTLCISVLLSLTV). Position 263 (Glu263) interacts with Na(+). At 278-299 (FLLVITETIPSTSLVIPLIGEY) the chain is on the extracellular side. A helical transmembrane segment spans residues 300–318 (LLFTMIFVTLSIVITVFVL). Residues 319-482 (NVHYRTPMTH…EDDWKYVAMV (164 aa)) lie on the Cytoplasmic side of the membrane. Residues 356–389 (ESSGKGGGEIAGSSGTGGGRGAEGKKMKSSASQQ) are disordered. Residues 359–376 (GKGGGEIAGSSGTGGGRG) are compositionally biased toward gly residues. Residues 483–501 (IDRIFLWVFVLVCVLGTLG) traverse the membrane as a helical segment. At 502 to 512 (LFLQPLIGFFS) the chain is on the extracellular side.

The protein belongs to the ligand-gated ion channel (TC 1.A.9) family. Acetylcholine receptor (TC 1.A.9.1) subfamily. Alpha-3/CHRNA3 sub-subfamily. Neuronal AChR is composed of two different types of subunits: alpha and beta. CHRNA3/Alpha-3 subunit can be combined to CHRNB2/beta-2 or CHRNB4/beta-4 to give rise to functional receptors. Expressed in retina and brain.

Its subcellular location is the synaptic cell membrane. It localises to the cell membrane. The protein localises to the endoplasmic reticulum. The protein resides in the golgi apparatus. It catalyses the reaction K(+)(in) = K(+)(out). The enzyme catalyses Na(+)(in) = Na(+)(out). It carries out the reaction Ca(2+)(in) = Ca(2+)(out). Activated by a myriad of ligands such as acetylcholine, cytisine, nicotine, choline and epibatidine. The heteropentamer CHRNA3:CHRNB2 activity is blocked by alpha-conotoxins ImI, ImII, PnIA, GID and MII. The heteropentamer CHRNA3:CHRNB4 activity is blocked by the alpha-conotoxin ImI and AuIB. Functionally, component of neuronal acetylcholine receptors (nAChRs) that function as pentameric, ligand-gated cation channels with high calcium permeability among other activities. nAChRs are excitatory neurotrasnmitter receptors formed by a collection of nAChR subunits known to mediate synaptic transmission in the nervous system and the neuromuscular junction. Each nAchR subunit confers differential attributes to channel properties, including activation, deactivation and desensitization kinetics, pH sensitivity, cation permeability, and binding to allosteric modulators. CHRNA3 forms heteropentameric neuronal acetylcholine receptors with CHRNB2 and CHRNB4. CHRNA3:CHRNB4 being predominant in neurons of the autonomic ganglia, it is known as ganglionic nicotinic receptor. CHRNA3:CHRNB4 also plays an important role in the habenulo-interpeduncular tract, modulating the mesolimbic dopamine system and affecting reward circuits and addiction. Hypothalamic CHRNA3:CHRNB4 nAChR activation by nicotine leads to activation of POMC neurons and a decrease in food intake. Also expressed in the urothelium where it modulates reflex bladder activity by increasing intracellular calcium through extracellular influx and basal ATP release. This is Neuronal acetylcholine receptor subunit alpha-3 (chrna3) from Carassius auratus (Goldfish).